Consider the following 256-residue polypeptide: Type III pantothenate kinase (256 aa).

6 to 13 (DVGNTNMV) is an ATP binding site. Substrate-binding positions include tyrosine 100 and 107–110 (GADR). The active-site Proton acceptor is the aspartate 109. K(+) is bound at residue aspartate 129. Threonine 132 serves as a coordination point for ATP. Substrate is bound at residue threonine 184.

The protein belongs to the type III pantothenate kinase family. As to quaternary structure, homodimer. The cofactor is NH4(+). It depends on K(+) as a cofactor.

The protein localises to the cytoplasm. The enzyme catalyses (R)-pantothenate + ATP = (R)-4'-phosphopantothenate + ADP + H(+). It participates in cofactor biosynthesis; coenzyme A biosynthesis; CoA from (R)-pantothenate: step 1/5. Catalyzes the phosphorylation of pantothenate (Pan), the first step in CoA biosynthesis. This chain is Type III pantothenate kinase, found in Clostridioides difficile (strain 630) (Peptoclostridium difficile).